A 146-amino-acid polypeptide reads, in one-letter code: Hemoglobin subunit beta (146 aa).

Val1 carries the N-acetylvaline modification. In terms of domain architecture, Globin spans 2–146; the sequence is HLTGEEKSAV…VANALAHKYH (145 aa). Residue Thr12 is modified to Phosphothreonine. Residue Ser44 is modified to Phosphoserine. Lys59 is subject to N6-acetyllysine. Position 63 (His63) interacts with heme b. Position 82 is an N6-acetyllysine (Lys82). His92 serves as a coordination point for heme b. At Cys93 the chain carries S-nitrosocysteine. Lys144 bears the N6-acetyllysine mark.

The protein belongs to the globin family. Heterotetramer of two alpha chains and two beta chains. Red blood cells.

Its function is as follows. Involved in oxygen transport from the lung to the various peripheral tissues. In Nycticebus coucang (Slow loris), this protein is Hemoglobin subunit beta (HBB).